The primary structure comprises 124 residues: Small ribosomal subunit protein uS12 (124 aa).

The disordered stretch occupies residues 1-28; it reads MPTISQLIGSERKRLTRKTKSPALKSCP. Asp89 carries the 3-methylthioaspartic acid modification. Residues 104–124 are disordered; that stretch reads TAGVKDRRQSRSKYGAKAPKD.

It belongs to the universal ribosomal protein uS12 family. As to quaternary structure, part of the 30S ribosomal subunit. Contacts proteins S8 and S17. May interact with IF1 in the 30S initiation complex.

Functionally, with S4 and S5 plays an important role in translational accuracy. Its function is as follows. Interacts with and stabilizes bases of the 16S rRNA that are involved in tRNA selection in the A site and with the mRNA backbone. Located at the interface of the 30S and 50S subunits, it traverses the body of the 30S subunit contacting proteins on the other side and probably holding the rRNA structure together. The combined cluster of proteins S8, S12 and S17 appears to hold together the shoulder and platform of the 30S subunit. The sequence is that of Small ribosomal subunit protein uS12 from Prochlorococcus marinus (strain MIT 9312).